The chain runs to 557 residues: MGRTLTSVLVVFISMAGWLGGADTGSISGILGMRDFQSRFADRYNPITNSYSYSAWRQALLTGTVNAGCLFGAMLSSPFTEAIGKKYSIAFFSGCYIIGQILLVTAVPSWVQIMVGKLFTGLTIGALSVLSPGYQSEVAPPQIRGAVVSTYQLFQTCGTLIAACINMGTHKLRKTASWRTSFGINILWGIFLMVGVLFLPESPRYLIYKGRDEEALRIMCQTAELDPESEIIQTNFNTIKSDIEMEMAGGKARWPEVFGKEVRYRTVLGFLTMLLRELIGNNYYFYYATQVFKGTGMTDIFLPAVILGAINFGTTFGALYTIDNLGRRNPLIFGAAFQSICFFIYAAVGDRKLIYKNGTSDHRAGAVMIVFSCLFLFSYCCSWGPMGWVIVGETFPIRYRSKCAAVATSGNWLGNFMVSFFTPFISNSIGFKLGYIYACINMTSAFQIFLMAKETKGLTLEEVNELYESDIKPWDSYKYVRQIESRRIHFSKEEEKREREKSKGYRGQEERFIENADGADNDDSSASSESFASAGAHSRSVFPRRSNVSEESHPTWV.

At Met-1–Leu-9 the chain is on the cytoplasmic side. A helical transmembrane segment spans residues Val-10–Ile-30. Over Leu-31–Gln-58 the chain is Extracellular. Residues Ala-59–Phe-79 traverse the membrane as a helical segment. Topologically, residues Thr-80–Tyr-87 are cytoplasmic. The chain crosses the membrane as a helical span at residues Ser-88–Pro-108. The Extracellular segment spans residues Ser-109–Gln-112. A helical transmembrane segment spans residues Ile-113–Gly-133. Residues Tyr-134–Arg-144 are Cytoplasmic-facing. Residues Gly-145–Ile-165 form a helical membrane-spanning segment. Residues Asn-166–Arg-179 are Extracellular-facing. A helical membrane pass occupies residues Thr-180–Pro-200. The Cytoplasmic portion of the chain corresponds to Glu-201–Thr-266. A helical transmembrane segment spans residues Val-267–Phe-285. Topologically, residues Tyr-286–Phe-301 are extracellular. Residues Leu-302 to Ile-322 form a helical membrane-spanning segment. The Cytoplasmic segment spans residues Asp-323–Arg-328. Residues Asn-329 to Gly-349 form a helical membrane-spanning segment. Residues Asp-350–Arg-363 are Extracellular-facing. N-linked (GlcNAc...) asparagine glycosylation is present at Asn-357. A helical transmembrane segment spans residues Ala-364 to Gly-384. Residues Pro-385 to Ala-404 are Cytoplasmic-facing. A helical transmembrane segment spans residues Ala-405 to Ile-425. Residues Ser-426–Lys-432 lie on the Extracellular side of the membrane. The helical transmembrane segment at Leu-433–Lys-453 threads the bilayer. Topologically, residues Glu-454–Val-557 are cytoplasmic. The segment covering Lys-492–Glu-514 has biased composition (basic and acidic residues). Residues Lys-492–Val-557 are disordered. Positions Ser-524 to Ala-536 are enriched in low complexity. The segment covering Asn-547 to Val-557 has biased composition (basic and acidic residues).

This sequence belongs to the major facilitator superfamily. Sugar transporter (TC 2.A.1.1) family.

It is found in the membrane. This Schizosaccharomyces pombe (strain 972 / ATCC 24843) (Fission yeast) protein is High-affinity hexose transporter ght4 (ght4).